The primary structure comprises 565 residues: FACT complex subunit ctc-1 (565 aa).

Disordered stretches follow at residues 151–173 (GNDGGKSNGHSGTGGKGKKASAG) and 477–565 (LGDD…KKTA). The span at 152-165 (NDGGKSNGHSGTGG) shows a compositional bias: gly residues. Composition is skewed to acidic residues over residues 478-489 (GDDDMASSDEEA), 500-522 (DEDEESVDEDFQAESESDVAEEY), and 532-553 (GSEESDVDNRVDDEDEDMDDDE).

It belongs to the SSRP1 family. Forms a stable heterodimer with ctc-2/spt16. The dimer of ctc-1 and ctc-2 weakly associates with multiple molecules of nhp-1/nhp6 to form the FACT complex.

The protein resides in the nucleus. Its subcellular location is the chromosome. Component of the FACT complex, a general chromatin factor that acts to reorganize nucleosomes. The FACT complex is involved in multiple processes that require DNA as a template such as mRNA elongation, DNA replication and DNA repair. During transcription elongation the FACT complex acts as a histone chaperone that both destabilizes and restores nucleosomal structure. It facilitates the passage of RNA polymerase II and transcription by promoting the dissociation of one histone H2A-H2B dimer from the nucleosome, then subsequently promotes the reestablishment of the nucleosome following the passage of RNA polymerase II. The protein is FACT complex subunit ctc-1 (ctc-1) of Neurospora crassa (strain ATCC 24698 / 74-OR23-1A / CBS 708.71 / DSM 1257 / FGSC 987).